The following is a 205-amino-acid chain: Large ribosomal subunit protein uL4 (205 aa).

The segment at 47-70 (TRAQKSRAEVSGGGKKPFRQKGTG) is disordered.

This sequence belongs to the universal ribosomal protein uL4 family. In terms of assembly, part of the 50S ribosomal subunit.

One of the primary rRNA binding proteins, this protein initially binds near the 5'-end of the 23S rRNA. It is important during the early stages of 50S assembly. It makes multiple contacts with different domains of the 23S rRNA in the assembled 50S subunit and ribosome. In terms of biological role, forms part of the polypeptide exit tunnel. The polypeptide is Large ribosomal subunit protein uL4 (Acinetobacter baylyi (strain ATCC 33305 / BD413 / ADP1)).